Reading from the N-terminus, the 846-residue chain is DNA mismatch repair protein MutS (846 aa).

Position 610-617 (610-617 (GPNMGGKS)) interacts with ATP.

Belongs to the DNA mismatch repair MutS family.

Functionally, this protein is involved in the repair of mismatches in DNA. It is possible that it carries out the mismatch recognition step. This protein has a weak ATPase activity. In Legionella pneumophila (strain Corby), this protein is DNA mismatch repair protein MutS.